We begin with the raw amino-acid sequence, 91 residues long: UPF0367 protein cce_2199 (91 aa).

This sequence belongs to the UPF0367 family.

This Crocosphaera subtropica (strain ATCC 51142 / BH68) (Cyanothece sp. (strain ATCC 51142)) protein is UPF0367 protein cce_2199.